The chain runs to 342 residues: UDP-3-O-acylglucosamine N-acyltransferase (342 aa).

Histidine 253 serves as the catalytic Proton acceptor.

The protein belongs to the transferase hexapeptide repeat family. LpxD subfamily. In terms of assembly, homotrimer.

The catalysed reaction is a UDP-3-O-[(3R)-3-hydroxyacyl]-alpha-D-glucosamine + a (3R)-hydroxyacyl-[ACP] = a UDP-2-N,3-O-bis[(3R)-3-hydroxyacyl]-alpha-D-glucosamine + holo-[ACP] + H(+). It participates in bacterial outer membrane biogenesis; LPS lipid A biosynthesis. In terms of biological role, catalyzes the N-acylation of UDP-3-O-acylglucosamine using 3-hydroxyacyl-ACP as the acyl donor. Is involved in the biosynthesis of lipid A, a phosphorylated glycolipid that anchors the lipopolysaccharide to the outer membrane of the cell. The polypeptide is UDP-3-O-acylglucosamine N-acyltransferase (Rickettsia canadensis (strain McKiel)).